The primary structure comprises 546 residues: CTP synthase (546 aa).

The amidoligase domain stretch occupies residues 1 to 266 (MTTNYIFVTG…DDLVCQRFGI (266 aa)). S14 is a CTP binding site. A UTP-binding site is contributed by S14. ATP-binding positions include 15-20 (SLGKGI) and D72. Residues D72 and E140 each coordinate Mg(2+). CTP is bound by residues 147 to 149 (DIE), 187 to 192 (KTKPTQ), and K223. UTP is bound by residues 187–192 (KTKPTQ) and K223. 239–241 (KDV) serves as a coordination point for ATP. Residues 291–542 (VIGMVGKYIE…VKAAGESVRG (252 aa)) form the Glutamine amidotransferase type-1 domain. L-glutamine is bound at residue G352. The active-site Nucleophile; for glutamine hydrolysis is the C379. L-glutamine is bound by residues 380-383 (LGMQ), E403, and R470. Residues H515 and E517 contribute to the active site.

The protein belongs to the CTP synthase family. As to quaternary structure, homotetramer.

It catalyses the reaction UTP + L-glutamine + ATP + H2O = CTP + L-glutamate + ADP + phosphate + 2 H(+). It carries out the reaction L-glutamine + H2O = L-glutamate + NH4(+). The enzyme catalyses UTP + NH4(+) + ATP = CTP + ADP + phosphate + 2 H(+). It functions in the pathway pyrimidine metabolism; CTP biosynthesis via de novo pathway; CTP from UDP: step 2/2. Its activity is regulated as follows. Allosterically activated by GTP, when glutamine is the substrate; GTP has no effect on the reaction when ammonia is the substrate. The allosteric effector GTP functions by stabilizing the protein conformation that binds the tetrahedral intermediate(s) formed during glutamine hydrolysis. Inhibited by the product CTP, via allosteric rather than competitive inhibition. Functionally, catalyzes the ATP-dependent amination of UTP to CTP with either L-glutamine or ammonia as the source of nitrogen. Regulates intracellular CTP levels through interactions with the four ribonucleotide triphosphates. The polypeptide is CTP synthase (Aliivibrio fischeri (strain MJ11) (Vibrio fischeri)).